Reading from the N-terminus, the 217-residue chain is Trichothecene biosynthesis transcription regulator TRI6 (217 aa).

A C2H2-type zinc finger spans residues 185–215 (VRCPWHDQEGQQCLRVFSRVDNMRDHYRRIH).

It localises to the nucleus. Transcriptional activator of part of the core trichothecene biosynthesis cluster. In Fusarium sporotrichioides, this protein is Trichothecene biosynthesis transcription regulator TRI6.